The following is a 75-amino-acid chain: Sec-independent protein translocase protein TatA (75 aa).

The chain crosses the membrane as a helical span at residues 1 to 21 (MGSMSIWHWIVVLAVVLLLFG). A disordered region spans residues 43 to 75 (MAEDDDAPAKPAEPPRAVPHQATPAPESEKKAV).

The protein belongs to the TatA/E family. As to quaternary structure, the Tat system comprises two distinct complexes: a TatABC complex, containing multiple copies of TatA, TatB and TatC subunits, and a separate TatA complex, containing only TatA subunits. Substrates initially bind to the TatABC complex, which probably triggers association of the separate TatA complex to form the active translocon.

It localises to the cell inner membrane. Its function is as follows. Part of the twin-arginine translocation (Tat) system that transports large folded proteins containing a characteristic twin-arginine motif in their signal peptide across membranes. TatA could form the protein-conducting channel of the Tat system. The chain is Sec-independent protein translocase protein TatA from Azorhizobium caulinodans (strain ATCC 43989 / DSM 5975 / JCM 20966 / LMG 6465 / NBRC 14845 / NCIMB 13405 / ORS 571).